The following is a 115-amino-acid chain: NADH-ubiquinone oxidoreductase chain 3 (115 aa).

3 consecutive transmembrane segments (helical) span residues 3-23 (LFIM…LNLL), 55-75 (FFMV…LLPL), and 87-107 (TITW…YEWL).

This sequence belongs to the complex I subunit 3 family.

It localises to the mitochondrion membrane. The enzyme catalyses a ubiquinone + NADH + 5 H(+)(in) = a ubiquinol + NAD(+) + 4 H(+)(out). Functionally, core subunit of the mitochondrial membrane respiratory chain NADH dehydrogenase (Complex I) that is believed to belong to the minimal assembly required for catalysis. Complex I functions in the transfer of electrons from NADH to the respiratory chain. The immediate electron acceptor for the enzyme is believed to be ubiquinone. The chain is NADH-ubiquinone oxidoreductase chain 3 (MT-ND3) from Alligator mississippiensis (American alligator).